The sequence spans 131 residues: Fluoride-specific ion channel FluC 2 (131 aa).

Helical transmembrane passes span 4-24 (IIQG…ARFW), 46-66 (VSGA…HGVF), 71-91 (PWLF…SFAL), and 105-125 (AISN…LGFA). The Na(+) site is built by glycine 81 and threonine 84.

Belongs to the fluoride channel Fluc/FEX (TC 1.A.43) family.

The protein resides in the cell inner membrane. It catalyses the reaction fluoride(in) = fluoride(out). Its activity is regulated as follows. Na(+) is not transported, but it plays an essential structural role and its presence is essential for fluoride channel function. Its function is as follows. Fluoride-specific ion channel. Important for reducing fluoride concentration in the cell, thus reducing its toxicity. The polypeptide is Fluoride-specific ion channel FluC 2 (Rhodopseudomonas palustris (strain BisB18)).